A 500-amino-acid polypeptide reads, in one-letter code: Monocarboxylate transporter 1 (500 aa).

The Cytoplasmic segment spans residues 1–22 (MPPAVGGPVGYTPPDGGWGWAV). A helical transmembrane segment spans residues 23–44 (VIGAFISIGFSYAFPKSITVFF). (S)-lactate is bound at residue Lys38. Topologically, residues 45-55 (KEIEGIFHATT) are extracellular. A helical transmembrane segment spans residues 56–80 (SEVSWISSIMLAVMYGGGPISSILV). Topologically, residues 81-84 (NKYG) are cytoplasmic. The helical transmembrane segment at 85-105 (SRIVMIVGGCLSGCGLIAASF) threads the bilayer. The Extracellular portion of the chain corresponds to 106–109 (CNTV). The helical transmembrane segment at 110 to 132 (QQLYVCIGVIGGLGLAFNLNPAL) threads the bilayer. At 133 to 146 (TMIGKYFYKRRPLA) the chain is on the cytoplasmic side. Residues 147–169 (NGLAMAGSPVFLCTLAPLNQVFF) form a helical membrane-spanning segment. At 170–174 (GIFGW) the chain is on the extracellular side. A helical transmembrane segment spans residues 175 to 194 (RGSFLILGGLLLNCCVAGAL). Over 195-261 (MRPIGPKPTK…FLDLTLFTHR (67 aa)) the chain is Cytoplasmic. 2 positions are modified to phosphoserine: Ser210 and Ser213. Thr231 is subject to Phosphothreonine. A helical transmembrane segment spans residues 262-288 (GFLLYLSGNVIMFFGLFAPLVFLSSYG). Residues 289 to 295 (KSQHYSS) lie on the Extracellular side of the membrane. The helical transmembrane segment at 296-317 (EKSAFLLSILAFVDMVARPSMG) threads the bilayer. Asp309 is a binding site for H(+). Arg313 lines the (S)-lactate pocket. The Cytoplasmic portion of the chain corresponds to 318-328 (LVANTKPIRPR). A helical membrane pass occupies residues 329 to 349 (IQYFFAASVVANGVCHMLAPL). The Extracellular portion of the chain corresponds to 350-353 (STTY). A helical transmembrane segment spans residues 354-375 (VGFCVYAGFFGFAFGWLSSVLF). Residues 376-389 (ETLMDLVGPQRFSS) lie on the Cytoplasmic side of the membrane. Residues 390–410 (AVGLVTIVECCPVLLGPPLLG) traverse the membrane as a helical segment. Residues 411-421 (RLNDMYGDYKY) are Extracellular-facing. The helical transmembrane segment at 422–443 (TYWACGVVLIISGIYLFIGMGI) threads the bilayer. Residues 444 to 500 (NYRLLAKEQKANEQKKESKEEETSIDVAGKPNEVTKAAESPDQKDTDGGPKEEESPV) lie on the Cytoplasmic side of the membrane. Over residues 454-465 (ANEQKKESKEEE) the composition is skewed to basic and acidic residues. A disordered region spans residues 454 to 500 (ANEQKKESKEEETSIDVAGKPNEVTKAAESPDQKDTDGGPKEEESPV). At Ser461 the chain carries Phosphoserine. At Thr466 the chain carries Phosphothreonine. Phosphoserine occurs at positions 467, 483, and 498. Over residues 482-500 (ESPDQKDTDGGPKEEESPV) the composition is skewed to basic and acidic residues.

The protein belongs to the major facilitator superfamily. Monocarboxylate porter (TC 2.A.1.13) family. As to quaternary structure, interacts with EMB; interaction mediates SLC16A1 targeting to the plasma membrane. Interacts with isoform 2 of BSG; interaction mediates SLC16A1 targeting to the plasma membrane. In terms of tissue distribution, widely expressed. Detected in heart and in blood lymphocytes and monocytes (at protein level).

The protein resides in the cell membrane. It is found in the basolateral cell membrane. The protein localises to the apical cell membrane. The catalysed reaction is (S)-lactate(in) + H(+)(in) = (S)-lactate(out) + H(+)(out). It carries out the reaction acetate(out) + H(+)(out) = acetate(in) + H(+)(in). The enzyme catalyses acetoacetate(out) + H(+)(out) = acetoacetate(in) + H(+)(in). It catalyses the reaction pyruvate(out) + H(+)(out) = pyruvate(in) + H(+)(in). The catalysed reaction is (R)-3-hydroxybutanoate(out) + H(+)(out) = (R)-3-hydroxybutanoate(in) + H(+)(in). It carries out the reaction 3-methyl-2-oxobutanoate(out) + H(+)(out) = 3-methyl-2-oxobutanoate(in) + H(+)(in). The enzyme catalyses 4-methyl-2-oxopentanoate(out) + H(+)(out) = 4-methyl-2-oxopentanoate(in) + H(+)(in). It catalyses the reaction succinate(in) + 2 H(+)(in) = succinate(out) + 2 H(+)(out). With respect to regulation, selectively inhibited by AZD3965, that acts as a competitive inhibitor binding to the central channel in the outward open conformation. Bidirectional proton-coupled monocarboxylate transporter. Catalyzes the rapid transport across the plasma membrane of many monocarboxylates such as lactate, pyruvate, acetate and the ketone bodies acetoacetate and beta-hydroxybutyrate, and thus contributes to the maintenance of intracellular pH. The transport direction is determined by the proton motive force and the concentration gradient of the substrate monocarboxylate. MCT1 is a major lactate exporter. Plays a role in cellular responses to a high-fat diet by modulating the cellular levels of lactate and pyruvate that contribute to the regulation of central metabolic pathways and insulin secretion, with concomitant effects on plasma insulin levels and blood glucose homeostasis. Facilitates the protonated monocarboxylate form of succinate export, that its transient protonation upon muscle cell acidification in exercising muscle and ischemic heart. Functions via alternate outward- and inward-open conformation states. Protonation and deprotonation of 309-Asp is essential for the conformational transition. The sequence is that of Monocarboxylate transporter 1 from Homo sapiens (Human).